A 96-amino-acid polypeptide reads, in one-letter code: Co-chaperonin GroES (96 aa).

Belongs to the GroES chaperonin family. As to quaternary structure, heptamer of 7 subunits arranged in a ring. Interacts with the chaperonin GroEL.

It is found in the cytoplasm. Functionally, together with the chaperonin GroEL, plays an essential role in assisting protein folding. The GroEL-GroES system forms a nano-cage that allows encapsulation of the non-native substrate proteins and provides a physical environment optimized to promote and accelerate protein folding. GroES binds to the apical surface of the GroEL ring, thereby capping the opening of the GroEL channel. The chain is Co-chaperonin GroES from Histophilus somni (strain 129Pt) (Haemophilus somnus).